A 372-amino-acid polypeptide reads, in one-letter code: 4-hydroxy-3-methylbut-2-en-1-yl diphosphate synthase (flavodoxin) (372 aa).

Residues cysteine 270, cysteine 273, cysteine 305, and glutamate 312 each contribute to the [4Fe-4S] cluster site.

Belongs to the IspG family. It depends on [4Fe-4S] cluster as a cofactor.

It carries out the reaction (2E)-4-hydroxy-3-methylbut-2-enyl diphosphate + oxidized [flavodoxin] + H2O + 2 H(+) = 2-C-methyl-D-erythritol 2,4-cyclic diphosphate + reduced [flavodoxin]. Its pathway is isoprenoid biosynthesis; isopentenyl diphosphate biosynthesis via DXP pathway; isopentenyl diphosphate from 1-deoxy-D-xylulose 5-phosphate: step 5/6. Converts 2C-methyl-D-erythritol 2,4-cyclodiphosphate (ME-2,4cPP) into 1-hydroxy-2-methyl-2-(E)-butenyl 4-diphosphate. This Vibrio campbellii (strain ATCC BAA-1116) protein is 4-hydroxy-3-methylbut-2-en-1-yl diphosphate synthase (flavodoxin).